Reading from the N-terminus, the 130-residue chain is Small ribosomal subunit protein uS8 (130 aa).

It belongs to the universal ribosomal protein uS8 family. Part of the 30S ribosomal subunit. Contacts proteins S5 and S12.

Its function is as follows. One of the primary rRNA binding proteins, it binds directly to 16S rRNA central domain where it helps coordinate assembly of the platform of the 30S subunit. This is Small ribosomal subunit protein uS8 from Pseudomonas fluorescens (strain ATCC BAA-477 / NRRL B-23932 / Pf-5).